The chain runs to 283 residues: Lectin subunit alpha (283 aa).

An N-terminal signal peptide occupies residues 1–23 (MSLTMKNVEGFVIFLVIFTSTAA). The C-type lectin domain occupies 51–159 (HECARHDQQL…NVKMGYICEP (109 aa)). 2 disulfide bridges follow: cysteine 53/cysteine 157 and cysteine 132/cysteine 149.

Its function is as follows. Role in the defense system of the organism against microorganisms. This lectin binds galactose. The chain is Lectin subunit alpha from Sarcophaga peregrina (Flesh fly).